We begin with the raw amino-acid sequence, 102 residues long: MTDTLSPWHLYMLRLPNGMLYTGITTDVERRLAQHQAGKGAKALRGKGELVLAFHCLAGDRSKALRLEYRVKQLSKTQKERLVNHPPLTLDHLLPDAEIKTG.

In terms of domain architecture, GIY-YIG spans 6-81; that stretch reads SPWHLYMLRL…KQLSKTQKER (76 aa).

The protein belongs to the UPF0213 family.

This Serratia liquefaciens protein is UPF0213 protein in potE 3'region.